The primary structure comprises 515 residues: Maturase K (515 aa).

The protein belongs to the intron maturase 2 family. MatK subfamily.

The protein resides in the plastid. It is found in the chloroplast. Its function is as follows. Usually encoded in the trnK tRNA gene intron. Probably assists in splicing its own and other chloroplast group II introns. This Pinus clausa (Sand pine) protein is Maturase K.